Here is a 447-residue protein sequence, read N- to C-terminus: Phosphoglucosamine mutase (447 aa).

The active-site Phosphoserine intermediate is serine 101. Mg(2+) is bound by residues serine 101, aspartate 242, aspartate 244, and aspartate 246. Position 101 is a phosphoserine (serine 101).

Belongs to the phosphohexose mutase family. Requires Mg(2+) as cofactor. Post-translationally, activated by phosphorylation.

It carries out the reaction alpha-D-glucosamine 1-phosphate = D-glucosamine 6-phosphate. Catalyzes the conversion of glucosamine-6-phosphate to glucosamine-1-phosphate. The polypeptide is Phosphoglucosamine mutase (Methylobacterium radiotolerans (strain ATCC 27329 / DSM 1819 / JCM 2831 / NBRC 15690 / NCIMB 10815 / 0-1)).